We begin with the raw amino-acid sequence, 585 residues long: Glycerol-3-phosphate dehydrogenase (585 aa).

Residue 37-65 (DVVVIGGGVVGSGCALDAATRGLKVALVE) coordinates FAD.

It belongs to the FAD-dependent glycerol-3-phosphate dehydrogenase family. FAD serves as cofactor.

It localises to the cytoplasm. It carries out the reaction a quinone + sn-glycerol 3-phosphate = dihydroxyacetone phosphate + a quinol. In Mycobacterium leprae (strain TN), this protein is Glycerol-3-phosphate dehydrogenase (glpD).